Consider the following 153-residue polypeptide: UPF0260 protein YcgN (153 aa).

The protein belongs to the UPF0260 family.

This Salmonella paratyphi B (strain ATCC BAA-1250 / SPB7) protein is UPF0260 protein YcgN.